We begin with the raw amino-acid sequence, 89 residues long: Large ribosomal subunit protein eL34 (89 aa).

A disordered region spans residues 45-71 (GIPRGRPVEMRKLPKTKKRPERPMPHL).

The protein belongs to the eukaryotic ribosomal protein eL34 family. Part of the 50S ribosomal subunit.

The chain is Large ribosomal subunit protein eL34 from Pyrococcus furiosus (strain ATCC 43587 / DSM 3638 / JCM 8422 / Vc1).